A 595-amino-acid polypeptide reads, in one-letter code: Aspartate--tRNA(Asp/Asn) ligase (595 aa).

E175 lines the L-aspartate pocket. The segment at 199–202 (QQYK) is aspartate. L-aspartate contacts are provided by R221 and H454. 221–223 (RDE) contacts ATP. E488 contributes to the ATP binding site. R495 contacts L-aspartate. 540–543 (GIDR) contacts ATP.

Belongs to the class-II aminoacyl-tRNA synthetase family. Type 1 subfamily. As to quaternary structure, homodimer.

The protein resides in the cytoplasm. The enzyme catalyses tRNA(Asx) + L-aspartate + ATP = L-aspartyl-tRNA(Asx) + AMP + diphosphate. Functionally, aspartyl-tRNA synthetase with relaxed tRNA specificity since it is able to aspartylate not only its cognate tRNA(Asp) but also tRNA(Asn). Reaction proceeds in two steps: L-aspartate is first activated by ATP to form Asp-AMP and then transferred to the acceptor end of tRNA(Asp/Asn). The sequence is that of Aspartate--tRNA(Asp/Asn) ligase from Brucella abortus (strain S19).